We begin with the raw amino-acid sequence, 291 residues long: 4-hydroxy-tetrahydrodipicolinate synthase (291 aa).

Residue T44 participates in pyruvate binding. The active-site Proton donor/acceptor is the Y132. The active-site Schiff-base intermediate with substrate is K160. I202 contacts pyruvate.

The protein belongs to the DapA family. Homotetramer; dimer of dimers.

Its subcellular location is the cytoplasm. It carries out the reaction L-aspartate 4-semialdehyde + pyruvate = (2S,4S)-4-hydroxy-2,3,4,5-tetrahydrodipicolinate + H2O + H(+). It participates in amino-acid biosynthesis; L-lysine biosynthesis via DAP pathway; (S)-tetrahydrodipicolinate from L-aspartate: step 3/4. Catalyzes the condensation of (S)-aspartate-beta-semialdehyde [(S)-ASA] and pyruvate to 4-hydroxy-tetrahydrodipicolinate (HTPA). The polypeptide is 4-hydroxy-tetrahydrodipicolinate synthase (Thermodesulfovibrio yellowstonii (strain ATCC 51303 / DSM 11347 / YP87)).